We begin with the raw amino-acid sequence, 137 residues long: Small ribosomal subunit protein uS9 (137 aa).

Basic and acidic residues predominate over residues 106–117; sequence KTEGYLTRDPRA. Residues 106–137 form a disordered region; it reads KTEGYLTRDPRAKERRKYGLRKARKAPQYSKR. Residues 118 to 137 are compositionally biased toward basic residues; sequence KERRKYGLRKARKAPQYSKR.

This sequence belongs to the universal ribosomal protein uS9 family.

This is Small ribosomal subunit protein uS9 from Thermosynechococcus vestitus (strain NIES-2133 / IAM M-273 / BP-1).